The chain runs to 379 residues: Synaptic vesicle membrane protein VAT-1 (379 aa).

Phosphoserine is present on Ser-273.

Belongs to the zinc-containing alcohol dehydrogenase family. Quinone oxidoreductase subfamily. Cholinergic synaptic vesicles.

It localises to the cytoplasmic vesicle. The protein resides in the secretory vesicle. Its subcellular location is the synaptic vesicle membrane. Functionally, may play a central role in the functions mediated by specific classes of synaptic vesicles. The polypeptide is Synaptic vesicle membrane protein VAT-1 (Tetronarce californica (Pacific electric ray)).